An 809-amino-acid chain; its full sequence is MDHKEVVLLLLLFLKSGLGDSLDDYVNTQGAFLFSLSRKQVAARSVEECAAKCEAETNFICRAFQYHSKDQQCVVMAENSKTSPIARMRDVVLFEKRIYLSECKTGNGKNYRGTTSKTKSGVICQKWSVSSPHIPKYSPEKFPLAGLEENYCRNPDNDEKGPWCYTTDPETRFDYCDIPECEDECMHCSGEHYEGKISKTMSGIECQSWGSQSPHAHGYLPSKFPNKNLKMNYCRNPDGEPRPWCFTTDPNKRWEFCDIPRCTTPPPTSGPTYQCLKGRGENYRGTVSVTASGHTCQRWSAQSPHKHNRTPENFPCKNLEENYCRNPDGETAPWCYTTDSEVRWDYCKIPSCGSSTTSTEYLDAPVPPEQTPVAQDCYRGNGESYRGTSSTTITGRKCQSWVSMTPHRHEKTPGNFPNAGLTMNYCRNPDADKSPWCYTTDPRVRWEYCNLKKCSETEQQVTNFPAIAQVPSVEDLSEDCMFGNGKRYRGKRATTVAGVPCQEWAAQEPHRHSIFTPETNPRAGLEKNYCRNPDGDDNGPWCYTTNPQKLFDYCDVPQCVTSSFDCGKPKVEPKKCPARVVGGCVSIPHSWPWQISLRHRYGGHFCGGTLISPEWVLTAKHCLEKSSSPSSYKVILGAHEEYHLGEGVQEIDVSKLFKEPSEADIALLKLSSPAIITDKVIPACLPTPNYVVADRTACYITGWGETKGTYGAGLLKEARLPVIENKVCNRYEYLGGKVSPNELCAGHLAGGIDSCQGDSGGPLVCFEKDKYILQGVTSWGLGCALPNKPGVYVRVSRFVTWIEEIMRRN.

Residues 1–19 (MDHKEVVLLLLLFLKSGLG) form the signal peptide. One can recognise a PAN domain in the interval 20-98 (DSLDDYVNTQ…RDVVLFEKRI (79 aa)). Intrachain disulfides connect cysteine 49/cysteine 73, cysteine 53/cysteine 61, cysteine 103/cysteine 181, cysteine 124/cysteine 164, cysteine 152/cysteine 176, cysteine 185/cysteine 262, cysteine 188/cysteine 316, cysteine 206/cysteine 245, cysteine 234/cysteine 257, cysteine 275/cysteine 352, cysteine 296/cysteine 335, cysteine 324/cysteine 347, cysteine 377/cysteine 454, cysteine 398/cysteine 437, cysteine 426/cysteine 449, cysteine 480/cysteine 559, cysteine 501/cysteine 542, cysteine 530/cysteine 554, cysteine 566/cysteine 684, cysteine 576/cysteine 584, cysteine 606/cysteine 622, cysteine 698/cysteine 765, cysteine 728/cysteine 744, and cysteine 755/cysteine 783. Kringle domains are found at residues 103-181 (CKTG…IPEC) and 185-262 (CMHC…IPRC). O-linked (GalNAc...) threonine glycosylation occurs at threonine 268. 3 Kringle domains span residues 275–352 (CLKG…IPSC), 377–454 (CYRG…LKKC), and 480–559 (CMFG…VPQC). Asparagine 308 carries N-linked (GlcNAc...) asparagine glycosylation. A Peptidase S1 domain is found at 580–807 (VVGGCVSIPH…FVTWIEEIMR (228 aa)). Serine 596 is modified (phosphoserine). Residues histidine 621 and aspartate 664 each act as charge relay system in the active site. Serine 759 serves as the catalytic Charge relay system.

This sequence belongs to the peptidase S1 family. Plasminogen subfamily. Interacts with CSPG4 and AMOT. Interacts (via the Kringle domains) with HRG; the interaction tethers PLG to the cell surface and enhances its activation. Interacts (via Kringle 4 domain) with ADA; the interaction stimulates PLG activation when in complex with DPP4. Angiostatin: Interacts with ATP5F1A; the interaction inhibits most of the angiogenic effects of angiostatin. In terms of processing, N-linked glycan contains N-acetyllactosamine, sialic acid and is core fucosylated. O-linked glycans consist of Gal-GalNAc disaccharide which is modified with up to 2 sialic acid residues (microheterogeneity). In the presence of the inhibitor, the activation involves only cleavage after Arg-579, yielding two chains held together by two disulfide bonds. In the absence of the inhibitor, the activation involves additionally the removal of the activation peptide.

It is found in the secreted. It carries out the reaction Preferential cleavage: Lys-|-Xaa &gt; Arg-|-Xaa, higher selectivity than trypsin. Converts fibrin into soluble products.. Its activity is regulated as follows. Converted into plasmin by plasminogen activators, both plasminogen and its activator being bound to fibrin. Cannot be activated with streptokinase. Its function is as follows. Plasmin dissolves the fibrin of blood clots and acts as a proteolytic factor in a variety of other processes including embryonic development, tissue remodeling, tumor invasion, and inflammation. In ovulation, weakens the walls of the Graafian follicle. It activates the urokinase-type plasminogen activator, collagenases and several complement zymogens, such as C1, C4 and C5. Cleavage of fibronectin and laminin leads to cell detachment and apoptosis. Also cleaves fibrin, thrombospondin and von Willebrand factor. Its role in tissue remodeling and tumor invasion may be modulated by CSPG4. Binds to cells. The protein is Plasminogen (PLG) of Sus scrofa (Pig).